The primary structure comprises 205 residues: MRTIDKRIAPNVRLAATLVARAPALTLAYDARCKSRLAATLDTGEDVALVLPRGTVLRDGDVLVADDGALVRVAAAHEAVLLVRAPDALTLTRAAYHLGNRHTPVEVGAGCLKLEYDPVLADMLTRLGATVERASAPFQPEAGAYGGGHRHGHDATFAEDYALAQQVFDEHHGHSHSHSHDHDHDHDHDHQHGPCCSHGHHHGHR.

The segment covering 170–192 (EHHGHSHSHSHDHDHDHDHDHQH) has biased composition (basic and acidic residues). The disordered stretch occupies residues 170 to 205 (EHHGHSHSHSHDHDHDHDHDHQHGPCCSHGHHHGHR).

Belongs to the UreE family.

It localises to the cytoplasm. Its function is as follows. Involved in urease metallocenter assembly. Binds nickel. Probably functions as a nickel donor during metallocenter assembly. This Burkholderia pseudomallei (strain 668) protein is Urease accessory protein UreE.